The following is a 466-amino-acid chain: Asparagine--tRNA ligase (466 aa).

This sequence belongs to the class-II aminoacyl-tRNA synthetase family. As to quaternary structure, homodimer.

Its subcellular location is the cytoplasm. It catalyses the reaction tRNA(Asn) + L-asparagine + ATP = L-asparaginyl-tRNA(Asn) + AMP + diphosphate + H(+). The chain is Asparagine--tRNA ligase from Shewanella oneidensis (strain ATCC 700550 / JCM 31522 / CIP 106686 / LMG 19005 / NCIMB 14063 / MR-1).